The sequence spans 258 residues: Probable parvulin-type peptidyl-prolyl cis-trans isomerase (258 aa).

Positions 1 to 19 (MKRIAMLAAACVIAVPAFA) are cleaved as a signal peptide. A PpiC domain is found at 127 to 219 (KMEYKVRHIL…FGWHVIQVDD (93 aa)).

The protein belongs to the PpiC/parvulin rotamase family.

The enzyme catalyses [protein]-peptidylproline (omega=180) = [protein]-peptidylproline (omega=0). The chain is Probable parvulin-type peptidyl-prolyl cis-trans isomerase from Bordetella parapertussis (strain 12822 / ATCC BAA-587 / NCTC 13253).